A 302-amino-acid chain; its full sequence is Putative S-adenosyl-L-methionine-dependent methyltransferase MMAR_1068 (302 aa).

Residues D127 and 156–157 (DL) each bind S-adenosyl-L-methionine.

The protein belongs to the UPF0677 family.

Exhibits S-adenosyl-L-methionine-dependent methyltransferase activity. This Mycobacterium marinum (strain ATCC BAA-535 / M) protein is Putative S-adenosyl-L-methionine-dependent methyltransferase MMAR_1068.